Reading from the N-terminus, the 328-residue chain is RNA-binding protein KhpB (328 aa).

Positions 3–53 (VFTGSTVEEAIQKGLKELDIPRMKAHIKVISREKKGFLGLFGKKPAQVDIE) are jag_N domain. The tract at residues 54-180 (AISETTVVKA…GLKVETNFDI (127 aa)) is linker. Phosphothreonine is present on T89. The 78-residue stretch at 181 to 258 (EQVATEVMAY…SRTFYVTINV (78 aa)) folds into the KH domain. The R3H domain occupies 263-328 (EHRAEVLQTY…PNRYVVVDTE (66 aa)).

It belongs to the KhpB RNA-binding protein family. In terms of assembly, interacts with KhpA; the 2 proteins colocalize throughout the cell cycle, with some increase at midcell in dividing cells. Interacts with StkP which phosphorylates it, interacts with MltG, MreC, RodZ and YidC2. Post-translationally, phosphorylated on Thr-89 by StkP; there is another poorly phosphorylated residue in the protein. Dephosphorylated by PhpP.

It localises to the cytoplasm. Functionally, a probable RNA chaperone. Forms a complex with KhpA which binds to cellular RNA and controls its expression. Plays a role in peptidoglycan (PG) homeostasis and cell length regulation. Forms a complex with KhpA which presumably binds to about 170 cellular RNAs (mRNA, tRNA intergenic RNA and sRNAs); the proteins alone each bind the same set of RNAs. Suppresses the requirement for PBP2b (penA, a transpeptidase) in peripheral peptidoglycan (PG) synthesis. May function as a pleiotropic RNA chaperone controlling pneumococcal cell division, including PG homeostasis and regulating peripheral PG synthesis by the elongasome. This Streptococcus pneumoniae serotype 2 (strain D39 / NCTC 7466) protein is RNA-binding protein KhpB.